We begin with the raw amino-acid sequence, 37 residues long: Turripeptide Lol6.2 (37 aa).

3 disulfides stabilise this stretch: Cys4-Cys16, Cys8-Cys21, and Cys15-Cys29.

Expressed by the venom duct.

The protein localises to the secreted. Acts as a neurotoxin by inhibiting an ion channel. The sequence is that of Turripeptide Lol6.2 from Iotyrris olangoensis (Sea snail).